The sequence spans 642 residues: Stress-activated map kinase-interacting protein 1 homolog (642 aa).

The CRIM domain occupies 189–314; the sequence is ARIREVIGYC…EREPLFQGLL (126 aa). Positions 603–642 are disordered; sequence IVSPSSDAPSRSSNGKNGGKFRKMSSLMASVMGRRKSDSK. The segment covering 605–615 has biased composition (low complexity); that stretch reads SPSSDAPSRSS.

Belongs to the SIN1 family. As to quaternary structure, component of the target of rapamycin complex 2 (TORC2).

Its function is as follows. Component of the target of rapamycin complex 2 (TORC2), which transduces signals from growth factors to pathways involved in proliferation, cytoskeletal organization and anabolic output. In response to growth factors, TORC2 phosphorylates and activates AGC protein kinase family members, such as Akt1. Within the TORC2 complex, sinh-1 acts as a substrate adapter which recognizes and binds AGC protein kinase family members for phosphorylation by mTor. The chain is Stress-activated map kinase-interacting protein 1 homolog (sinh-1) from Caenorhabditis elegans.